We begin with the raw amino-acid sequence, 264 residues long: NADH-quinone oxidoreductase subunit B 1 (264 aa).

[4Fe-4S] cluster is bound by residues Cys-42, Cys-43, Cys-108, and Cys-138.

Belongs to the complex I 20 kDa subunit family. In terms of assembly, NDH-1 is composed of 14 different subunits. Subunits NuoB, C, D, E, F, and G constitute the peripheral sector of the complex. The cofactor is [4Fe-4S] cluster.

It is found in the cell membrane. The enzyme catalyses a quinone + NADH + 5 H(+)(in) = a quinol + NAD(+) + 4 H(+)(out). Functionally, NDH-1 shuttles electrons from NADH, via FMN and iron-sulfur (Fe-S) centers, to quinones in the respiratory chain. The immediate electron acceptor for the enzyme in this species is believed to be ubiquinone. Couples the redox reaction to proton translocation (for every two electrons transferred, four hydrogen ions are translocated across the cytoplasmic membrane), and thus conserves the redox energy in a proton gradient. The polypeptide is NADH-quinone oxidoreductase subunit B 1 (Chloroflexus aurantiacus (strain ATCC 29366 / DSM 635 / J-10-fl)).